Here is a 526-residue protein sequence, read N- to C-terminus: Probable feruloyl esterase B-2 (526 aa).

Residues 1 to 18 form the signal peptide; it reads MTKLSLLPLLALASAVLA. Cystine bridges form between cysteine 27–cysteine 74 and cysteine 62–cysteine 113. Residues asparagine 52, asparagine 97, and asparagine 137 are each glycosylated (N-linked (GlcNAc...) asparagine). 4 disulfide bridges follow: cysteine 186/cysteine 441, cysteine 255/cysteine 272, cysteine 281/cysteine 291, and cysteine 503/cysteine 525. The active-site Acyl-ester intermediate is the serine 187. Residue asparagine 233 is glycosylated (N-linked (GlcNAc...) asparagine). Ca(2+) is bound by residues aspartate 256, aspartate 259, alanine 261, aspartate 263, and isoleucine 265. The N-linked (GlcNAc...) asparagine glycan is linked to asparagine 311. Residues aspartate 400 and histidine 440 each act as charge relay system in the active site. An N-linked (GlcNAc...) asparagine glycan is attached at asparagine 516.

It belongs to the tannase family.

It localises to the secreted. The enzyme catalyses feruloyl-polysaccharide + H2O = ferulate + polysaccharide.. Its function is as follows. Involved in degradation of plant cell walls. Hydrolyzes the feruloyl-arabinose ester bond in arabinoxylans as well as the feruloyl-galactose and feruloyl-arabinose ester bonds in pectin. This chain is Probable feruloyl esterase B-2 (faeB-2), found in Neosartorya fischeri (strain ATCC 1020 / DSM 3700 / CBS 544.65 / FGSC A1164 / JCM 1740 / NRRL 181 / WB 181) (Aspergillus fischerianus).